The sequence spans 473 residues: Sun domain-containing protein 1 (473 aa).

A disordered region spans residues 1–47 (MALRHTISPQFSNRHSPPVTRSVSRTGVHQPLDTSTPVTRRDSQPGT). Residues 7–47 (ISPQFSNRHSPPVTRSVSRTGVHQPLDTSTPVTRRDSQPGT) show a composition bias toward polar residues. 2 coiled-coil regions span residues 163–191 (ISNLRAEFSAHDKQLDFKTDHLEKLLENV) and 204–235 (EELKQIKLWQAEISDALQQMKKEIDDAKSTKI). The interval 237–257 (HSTPEKAPETAPTASLPPSSQ) is disordered. A compositionally biased stretch (polar residues) spans 248-257 (PTASLPPSSQ). A helical membrane pass occupies residues 262–282 (HITRRALLGVNVANSLIGASI). The SUN domain occupies 279–443 (GASIDHSCSS…YLIRVYGEPV (165 aa)). The disordered stretch occupies residues 443–473 (VDPPKETQPMTDNGTESKLESAIVNSVSETA).

It is found in the nucleus membrane. It localises to the nucleus envelope. Its function is as follows. Involved in centrosome attachment to the nucleus. Required for zyg-12 localization to the nuclear envelope. Together with pot-1, it is required to anchor telomeres to the nuclear envelope in embryos. This is Sun domain-containing protein 1 from Caenorhabditis elegans.